The sequence spans 236 residues: Transcription repressor MYB6 (236 aa).

HTH myb-type domains follow at residues 9 to 61 and 62 to 116; these read KAHT…INYL and RPDL…KRKL. 2 DNA-binding regions (H-T-H motif) span residues 37–61 and 89–112; these read WRSL…INYL and WSLI…NTHI. The tract at residues 159 to 181 is disordered; sequence PKTENSSDNGASTSGTTTDEDLR. Residues 162-175 are compositionally biased toward polar residues; sequence ENSSDNGASTSGTT.

In terms of assembly, interacts with BHLH012/MYC1 and BHLH042/TT8. As to expression, expressed in roots, stems, flower buds, and siliques.

The protein localises to the nucleus. In Arabidopsis thaliana (Mouse-ear cress), this protein is Transcription repressor MYB6 (MYB6).